A 457-amino-acid polypeptide reads, in one-letter code: MTSSDSHRSAPSPEHGTASTIEILPVAGLPEFRPGDDLSAALAAAAPWLRDGDVVVVTSKVVSKCEGRLVPAPEDTRGRNELRRKLINDETIRVLARKGRTLIIENGLGLVQAAAGVDGSNVGRGELALLPVNPDASAAVLRIGLRAMLGVNVAVVITDTMGRAWRNGQTDVAIGAAGLAVLHNYSGAVDRYGNELVVTEIAVADEVAAATDLVKGKLTAMPVAVVRGLSPTDDGSTAQHLLRNGPDDLFWLGTTEALELGRQQAQLLRRSVRQFSDEPIAAELIETAVAEALTAPAPHHTRPVRFVWLQTPAVRTRLLDRMADKWRLDLASDALPADAIAQRVARGQILYDAPEVIIPFMVPDGAHAYPDAARASAEHTMFIVAVGAAVQALLVALAVRGLGSCWIGSTIFADDLVRAELELPADWEPLGAIAIGYAHEPTDLREPVRVADLLLRK.

The interval 1–253 is coenzyme F420:L-glutamate ligase; sequence MTSSDSHRSA…NGPDDLFWLG (253 aa). GTP is bound by residues 29–32, Ser59, and Lys64; that span reads LPEF. Residue Asp118 coordinates a divalent metal cation. Residue Asn121 participates in GTP binding. A divalent metal cation is bound by residues Asp159 and Thr160. The segment at 254–457 is dehydro-coenzyme F420-0 reductase; that stretch reads TTEALELGRQ…VRVADLLLRK (204 aa). Residues 269 to 273 and Ala297 contribute to the FMN site; that span reads RRSVR. Position 329 (Asp329) interacts with coenzyme F420-(gamma-Glu)n. Residues Gly408 and Arg445 each contribute to the FMN site.

It in the N-terminal section; belongs to the CofE family. It depends on Mg(2+) as a cofactor. Mn(2+) serves as cofactor. Requires K(+) as cofactor.

The enzyme catalyses oxidized coenzyme F420-0 + GTP + L-glutamate = oxidized coenzyme F420-1 + GDP + phosphate + H(+). The catalysed reaction is oxidized coenzyme F420-1 + GTP + L-glutamate = oxidized coenzyme F420-2 + GDP + phosphate + H(+). It catalyses the reaction oxidized coenzyme F420-(gamma-L-Glu)(n) + GTP + L-glutamate = oxidized coenzyme F420-(gamma-L-Glu)(n+1) + GDP + phosphate + H(+). It carries out the reaction oxidized coenzyme F420-0 + FMN + H(+) = dehydro coenzyme F420-0 + FMNH2. The protein operates within cofactor biosynthesis; coenzyme F420 biosynthesis. In terms of biological role, bifunctional enzyme that catalyzes the GTP-dependent successive addition of multiple gamma-linked L-glutamates to the L-lactyl phosphodiester of 7,8-didemethyl-8-hydroxy-5-deazariboflavin (F420-0) to form polyglutamated F420 derivatives, and the FMNH2-dependent reduction of dehydro-F420-0 to form F420-0. The protein is Bifunctional F420 biosynthesis protein FbiB of Mycobacterium leprae (strain TN).